The chain runs to 320 residues: tRNA U34 carboxymethyltransferase (320 aa).

Carboxy-S-adenosyl-L-methionine is bound by residues Lys87, Trp101, Lys106, Gly126, 148–150, 176–177, Met192, Tyr196, and Arg311; these read EPS and VE.

This sequence belongs to the class I-like SAM-binding methyltransferase superfamily. CmoB family. In terms of assembly, homotetramer.

The catalysed reaction is carboxy-S-adenosyl-L-methionine + 5-hydroxyuridine(34) in tRNA = 5-carboxymethoxyuridine(34) in tRNA + S-adenosyl-L-homocysteine + H(+). In terms of biological role, catalyzes carboxymethyl transfer from carboxy-S-adenosyl-L-methionine (Cx-SAM) to 5-hydroxyuridine (ho5U) to form 5-carboxymethoxyuridine (cmo5U) at position 34 in tRNAs. This chain is tRNA U34 carboxymethyltransferase, found in Desulfotalea psychrophila (strain LSv54 / DSM 12343).